A 142-amino-acid polypeptide reads, in one-letter code: Hemoglobin subunit alpha (142 aa).

Positions 2–142 (VLSPADKSNV…VSTVLTSKYR (141 aa)) constitute a Globin domain. At serine 4 the chain carries Phosphoserine. Residues lysine 8 and lysine 12 each carry the N6-succinyllysine modification. N6-acetyllysine; alternate is present on lysine 17. The residue at position 17 (lysine 17) is an N6-succinyllysine; alternate. Tyrosine 25 is subject to Phosphotyrosine. Phosphoserine is present on serine 36. Lysine 41 carries the N6-succinyllysine modification. A Phosphoserine modification is found at serine 50. Histidine 59 is an O2 binding site. Histidine 88 lines the heme b pocket. Serine 103 is subject to Phosphoserine. Threonine 109 is modified (phosphothreonine). Serine 125 carries the phosphoserine modification. Phosphothreonine occurs at positions 135 and 138. A Phosphoserine modification is found at serine 139.

Belongs to the globin family. Heterotetramer of two alpha chains and two beta chains. Red blood cells.

In terms of biological role, involved in oxygen transport from the lung to the various peripheral tissues. Its function is as follows. Hemopressin acts as an antagonist peptide of the cannabinoid receptor CNR1. Hemopressin-binding efficiently blocks cannabinoid receptor CNR1 and subsequent signaling. The protein is Hemoglobin subunit alpha (HBA) of Ursus maritimus (Polar bear).